A 336-amino-acid polypeptide reads, in one-letter code: MARKLKGKIGSKGLKGALLRHKAKVKLVRNIESKQKHELRKKNSSANNKTVKRNQEFQKLNQGKVMPFEKDETLMLCGEGDFSFARSIVEQNYIESDNLIITSYDNSVNELKLKYPHTFEENYQYLKDLNIPIFFQIDVTKLVKSFKISKNNTWFKIINRLSDHRWGNKPLQNIVFNFPHNGKGIKDQERNIREHQDLIFNFFQNSLQLFNLINTKIQNDTLRYTQGYDLNEDTPQAKKLTAEGYGNIILSLFDGEPYDSWQIKLLAKKNGLTLSRSSKFQWENFPGYHHRRTNSEQDTTKPAKERDARFYIFSKYVSNSSKHNRKSKKDTDSDSD.

The interval 286-307 (PGYHHRRTNSEQDTTKPAKERD) is disordered. Over residues 293–307 (TNSEQDTTKPAKERD) the composition is skewed to basic and acidic residues.

This sequence belongs to the class I-like SAM-binding methyltransferase superfamily. BMT5 family.

The protein localises to the nucleus. The protein resides in the nucleolus. The catalysed reaction is uridine(2634) in 25S rRNA + S-adenosyl-L-methionine = N(3)-methyluridine(2634) in 25S rRNA + S-adenosyl-L-homocysteine + H(+). In terms of biological role, S-adenosyl-L-methionine-dependent methyltransferase that specifically methylates the N(3) position of uridine 2634 (m3U2634) in 25S rRNA. The chain is 25S rRNA (uridine(2634)-N(3))-methyltransferase (BMT5) from Saccharomyces cerevisiae (strain ATCC 204508 / S288c) (Baker's yeast).